We begin with the raw amino-acid sequence, 173 residues long: Probable WRKY transcription factor 50 (173 aa).

A DNA-binding region (WRKY) is located at residues 107–172 (SEVEVLDDGF…YEGSHNHSSM (66 aa)).

The protein belongs to the WRKY group II-c family.

Its subcellular location is the nucleus. Transcription factor. Interacts specifically with the W box (5'-(T)TGAC[CT]-3'), a frequently occurring elicitor-responsive cis-acting element. This Arabidopsis thaliana (Mouse-ear cress) protein is Probable WRKY transcription factor 50 (WRKY50).